The sequence spans 373 residues: L-threonine 3-dehydrogenase, mitochondrial (373 aa).

NAD(+)-binding positions include 62 to 67 (GGLGQL), 88 to 90 (DIR), 106 to 107 (DI), Tyr195, Lys199, and Ile225. The Proton donor/acceptor role is filled by Tyr195.

Belongs to the NAD(P)-dependent epimerase/dehydratase family. Homodimer.

Its subcellular location is the mitochondrion. It catalyses the reaction L-threonine + NAD(+) = (2S)-2-amino-3-oxobutanoate + NADH + H(+). Its pathway is amino-acid degradation; L-threonine degradation via oxydo-reductase pathway; glycine from L-threonine: step 1/2. Its function is as follows. Catalyzes the NAD(+)-dependent oxidation of L-threonine to 2-amino-3-ketobutyrate, mediating L-threonine catabolism. The sequence is that of L-threonine 3-dehydrogenase, mitochondrial from Sus scrofa (Pig).